Reading from the N-terminus, the 116-residue chain is Large ribosomal subunit protein bL17 (116 aa).

Belongs to the bacterial ribosomal protein bL17 family. In terms of assembly, part of the 50S ribosomal subunit. Contacts protein L32.

This Prochlorococcus marinus (strain MIT 9312) protein is Large ribosomal subunit protein bL17.